A 107-amino-acid chain; its full sequence is Nucleoid-associated protein R00231 (107 aa).

The protein belongs to the YbaB/EbfC family. In terms of assembly, homodimer.

The protein localises to the cytoplasm. It localises to the nucleoid. In terms of biological role, binds to DNA and alters its conformation. May be involved in regulation of gene expression, nucleoid organization and DNA protection. This chain is Nucleoid-associated protein R00231, found in Rhizobium meliloti (strain 1021) (Ensifer meliloti).